A 454-amino-acid polypeptide reads, in one-letter code: Chromosomal replication initiator protein DnaA (454 aa).

Positions 1–77 (MASLNENQKF…GFEVFGRMID (77 aa)) are domain I, interacts with DnaA modulators. Residues 77–115 (DYELYANDELTDIELRRLNNQSPVDEPLSVAKPTSPLVS) form a domain II region. A domain III, AAA+ region region spans residues 116-332 (GLNEKYNFEN…GALNRVEFVA (217 aa)). Gly160, Gly162, Lys163, and Thr164 together coordinate ATP. Residues 333–454 (RANGISIVDI…KDIDSIKRKF (122 aa)) are domain IV, binds dsDNA.

It belongs to the DnaA family. In terms of assembly, oligomerizes as a right-handed, spiral filament on DNA at oriC.

It localises to the cytoplasm. In terms of biological role, plays an essential role in the initiation and regulation of chromosomal replication. ATP-DnaA binds to the origin of replication (oriC) to initiate formation of the DNA replication initiation complex once per cell cycle. Binds the DnaA box (a 9 base pair repeat at the origin) and separates the double-stranded (ds)DNA. Forms a right-handed helical filament on oriC DNA; dsDNA binds to the exterior of the filament while single-stranded (ss)DNA is stabiized in the filament's interior. The ATP-DnaA-oriC complex binds and stabilizes one strand of the AT-rich DNA unwinding element (DUE), permitting loading of DNA polymerase. After initiation quickly degrades to an ADP-DnaA complex that is not apt for DNA replication. Binds acidic phospholipids. This is Chromosomal replication initiator protein DnaA from Lactococcus lactis subsp. cremoris (strain MG1363).